The primary structure comprises 88 residues: Fe-S protein maturation auxiliary factor SufT (88 aa).

Belongs to the MIP18 family.

Functionally, involved in the maturation of iron-sulfur (Fe-S) proteins. May function as a Fe-S cluster carrier. Is required for S.aureus growth under conditions that impose a high demand for lipoic acid, likely via a role in the maturation of the lipoate synthase LipA. Is non-essential for growth in conditions that impose a low demand for lipoic acid or Fe-S clusters, such as fermentative growth. Also seems to be involved in the maturation of AcnA, LeuCD and IlvD proteins, that utilize Fe-S cluster cofactors, and its role increases under conditions of high-demand for Fe-S clusters (respiratory growth). Is not involved in the repair of Fe-S clusters damaged by reactive oxygen species or in the physical protection of Fe-S clusters from oxidants. Displays synergy with the Fe-S cluster carrier Nfu. The protein is Fe-S protein maturation auxiliary factor SufT of Staphylococcus aureus (strain USA300).